Reading from the N-terminus, the 454-residue chain is Ornithine aminotransferase (454 aa).

N6-(pyridoxal phosphate)lysine is present on Lys-280.

It belongs to the class-III pyridoxal-phosphate-dependent aminotransferase family. Pyridoxal 5'-phosphate serves as cofactor.

Its subcellular location is the cytoplasm. The enzyme catalyses a 2-oxocarboxylate + L-ornithine = L-glutamate 5-semialdehyde + an L-alpha-amino acid. The protein operates within amino-acid biosynthesis; L-proline biosynthesis; L-glutamate 5-semialdehyde from L-ornithine: step 1/1. This chain is Ornithine aminotransferase (otaA), found in Emericella nidulans (strain FGSC A4 / ATCC 38163 / CBS 112.46 / NRRL 194 / M139) (Aspergillus nidulans).